The following is a 291-amino-acid chain: Protein ILRUN (291 aa).

The interval Asn-199–Val-275 is disordered. Low complexity predominate over residues Leu-257–Val-275.

Its subcellular location is the cytoplasm. It is found in the nucleus. Its function is as follows. May have a roles as negative regulator of innate antiviral response. The chain is Protein ILRUN (ILRUN) from Gallus gallus (Chicken).